We begin with the raw amino-acid sequence, 118 residues long: Large ribosomal subunit protein uL18 (118 aa).

It belongs to the universal ribosomal protein uL18 family. Part of the 50S ribosomal subunit; part of the 5S rRNA/L5/L18/L25 subcomplex. Contacts the 5S and 23S rRNAs.

This is one of the proteins that bind and probably mediate the attachment of the 5S RNA into the large ribosomal subunit, where it forms part of the central protuberance. The polypeptide is Large ribosomal subunit protein uL18 (Rickettsia conorii (strain ATCC VR-613 / Malish 7)).